Here is a 123-residue protein sequence, read N- to C-terminus: Small ribosomal subunit protein uS12cz/uS12cy (123 aa).

The protein belongs to the universal ribosomal protein uS12 family. In terms of assembly, part of the 30S ribosomal subunit.

It localises to the plastid. The protein localises to the chloroplast. In terms of biological role, with S4 and S5 plays an important role in translational accuracy. Located at the interface of the 30S and 50S subunits. The chain is Small ribosomal subunit protein uS12cz/uS12cy (rps12-A) from Nandina domestica (Heavenly bamboo).